The following is a 185-amino-acid chain: Large ribosomal subunit protein uL5 (185 aa).

This sequence belongs to the universal ribosomal protein uL5 family. In terms of assembly, part of the 50S ribosomal subunit; part of the 5S rRNA/L5/L18/L25 subcomplex. Contacts the 5S rRNA and the P site tRNA. Forms a bridge to the 30S subunit in the 70S ribosome.

Functionally, this is one of the proteins that bind and probably mediate the attachment of the 5S RNA into the large ribosomal subunit, where it forms part of the central protuberance. In the 70S ribosome it contacts protein S13 of the 30S subunit (bridge B1b), connecting the 2 subunits; this bridge is implicated in subunit movement. Contacts the P site tRNA; the 5S rRNA and some of its associated proteins might help stabilize positioning of ribosome-bound tRNAs. This chain is Large ribosomal subunit protein uL5, found in Rhodopseudomonas palustris (strain BisB18).